A 267-amino-acid chain; its full sequence is Large ribosomal subunit protein bL9m (267 aa).

A mitochondrion-targeting transit peptide spans 1 to 52; the sequence is MAAPVVTAPGRALLRAGAGRLLRGGVQELLRPRHEGNAPDLACNFSLSQNRG.

This sequence belongs to the bacterial ribosomal protein bL9 family. In terms of assembly, component of the mitochondrial large ribosomal subunit (mt-LSU). Mature mammalian 55S mitochondrial ribosomes consist of a small (28S) and a large (39S) subunit. The 28S small subunit contains a 12S ribosomal RNA (12S mt-rRNA) and 30 different proteins. The 39S large subunit contains a 16S rRNA (16S mt-rRNA), a copy of mitochondrial valine transfer RNA (mt-tRNA(Val)), which plays an integral structural role, and 52 different proteins.

It is found in the mitochondrion. This is Large ribosomal subunit protein bL9m (MRPL9) from Homo sapiens (Human).